Reading from the N-terminus, the 175-residue chain is NADH-quinone oxidoreductase subunit I (175 aa).

2 consecutive 4Fe-4S ferredoxin-type domains span residues 64–93 (KRDE…IIAD) and 110–139 (SLYE…LTEE). Residues Cys73, Cys76, Cys79, Cys83, Cys119, Cys122, Cys125, and Cys129 each coordinate [4Fe-4S] cluster.

The protein belongs to the complex I 23 kDa subunit family. As to quaternary structure, NDH-1 is composed of 14 different subunits. Subunits NuoA, H, J, K, L, M, N constitute the membrane sector of the complex. It depends on [4Fe-4S] cluster as a cofactor.

The protein resides in the cell inner membrane. It catalyses the reaction a quinone + NADH + 5 H(+)(in) = a quinol + NAD(+) + 4 H(+)(out). Its function is as follows. NDH-1 shuttles electrons from NADH, via FMN and iron-sulfur (Fe-S) centers, to quinones in the respiratory chain. The immediate electron acceptor for the enzyme in this species is believed to be ubiquinone. Couples the redox reaction to proton translocation (for every two electrons transferred, four hydrogen ions are translocated across the cytoplasmic membrane), and thus conserves the redox energy in a proton gradient. The sequence is that of NADH-quinone oxidoreductase subunit I from Cytophaga hutchinsonii (strain ATCC 33406 / DSM 1761 / CIP 103989 / NBRC 15051 / NCIMB 9469 / D465).